Consider the following 180-residue polypeptide: ATP-dependent protease subunit HslV (180 aa).

T2 is a catalytic residue. G157, C160, and T163 together coordinate Na(+).

The protein belongs to the peptidase T1B family. HslV subfamily. A double ring-shaped homohexamer of HslV is capped on each side by a ring-shaped HslU homohexamer. The assembly of the HslU/HslV complex is dependent on binding of ATP.

It is found in the cytoplasm. The catalysed reaction is ATP-dependent cleavage of peptide bonds with broad specificity.. With respect to regulation, allosterically activated by HslU binding. Protease subunit of a proteasome-like degradation complex believed to be a general protein degrading machinery. This is ATP-dependent protease subunit HslV from Tolumonas auensis (strain DSM 9187 / NBRC 110442 / TA 4).